The primary structure comprises 169 residues: Allophycocyanin subunit beta-18 (169 aa).

Asparagine 72 is subject to N4-methylasparagine. Cysteine 82 serves as a coordination point for (2R,3E)-phycocyanobilin.

It belongs to the phycobiliprotein family. As to quaternary structure, heterodimer of ApcE and this beta chain. In terms of processing, contains one covalently linked bilin chromophore. The chromophore is added by phycocyanobilin lyase CpcS 1.

The protein localises to the cellular thylakoid membrane. Its function is as follows. A variant beta-allophycocyanin (AP) which forms a complex with ApcE, a phycobilisome terminal emitter that influences energy transfer to photosystem II. The protein is Allophycocyanin subunit beta-18 (apcF) of Nostoc sp. (strain PCC 7120 / SAG 25.82 / UTEX 2576).